The sequence spans 429 residues: Phosphomethylpyrimidine synthase (429 aa).

Residues Asn66, Met95, Tyr124, His163, 185 to 187, 226 to 229, and Glu265 each bind substrate; these read SRG and DAMR. His269 provides a ligand contact to Zn(2+). Tyr292 lines the substrate pocket. A Zn(2+)-binding site is contributed by His333. 3 residues coordinate [4Fe-4S] cluster: Cys409, Cys412, and Cys416.

This sequence belongs to the ThiC family. The cofactor is [4Fe-4S] cluster.

The enzyme catalyses 5-amino-1-(5-phospho-beta-D-ribosyl)imidazole + S-adenosyl-L-methionine = 4-amino-2-methyl-5-(phosphooxymethyl)pyrimidine + CO + 5'-deoxyadenosine + formate + L-methionine + 3 H(+). It functions in the pathway cofactor biosynthesis; thiamine diphosphate biosynthesis. Its function is as follows. Catalyzes the synthesis of the hydroxymethylpyrimidine phosphate (HMP-P) moiety of thiamine from aminoimidazole ribotide (AIR) in a radical S-adenosyl-L-methionine (SAM)-dependent reaction. This Methanopyrus kandleri (strain AV19 / DSM 6324 / JCM 9639 / NBRC 100938) protein is Phosphomethylpyrimidine synthase.